Here is a 548-residue protein sequence, read N- to C-terminus: Frizzled-7-B (548 aa).

An N-terminal signal peptide occupies residues 1–18; that stretch reads MLAPVSLLFCLFLQLCPS. The Extracellular segment spans residues 19–230; that stretch reads AQQYHGEKGI…EEEVRFARLW (212 aa). Residues 31–150 form the FZ domain; that stretch reads PDHGFCQPIS…HGAGEICVGQ (120 aa). 5 disulfides stabilise this stretch: Cys-36–Cys-97, Cys-44–Cys-90, Cys-81–Cys-118, Cys-107–Cys-147, and Cys-111–Cys-135. Asn-50 carries N-linked (GlcNAc...) asparagine glycosylation. Asn-151 is a glycosylation site (N-linked (GlcNAc...) asparagine). The chain crosses the membrane as a helical span at residues 231–251; it reads VGIWAILCGISTLFTVLTYLV. At 252–262 the chain is on the cytoplasmic side; that stretch reads DMRRFSYPERP. A helical transmembrane segment spans residues 263–283; it reads IIFLSGCYFMVAVAYTAGFLL. Residues 284-311 are Extracellular-facing; it reads EERAVCVERFSEDSYRTVAQGTKKEGCT. A helical transmembrane segment spans residues 312–332; it reads ILFMILYFFGMASSIWWVILA. The Cytoplasmic portion of the chain corresponds to 333 to 353; it reads LTWFLSAGMKWGHEAIEANSQ. The chain crosses the membrane as a helical span at residues 354–374; sequence YFHLAAWAVPAVKTITILAMG. The Extracellular portion of the chain corresponds to 375 to 397; the sequence is QVDGDVLSGVCYVGINSVDSLRG. Residues 398-418 form a helical membrane-spanning segment; sequence FVLAPLFVYLFLGTSFLLAGF. Topologically, residues 419–444 are cytoplasmic; that stretch reads VSLFRIRTIMKHDGTKTEKLEKLMVR. Residues 445–465 traverse the membrane as a helical segment; it reads IGVFSVMYTVPATIVLACYFY. Over 466 to 502 the chain is Extracellular; it reads EQAFRDTWEKTWLVHTCKGYAVPCPNYNFAPMSPDFT. Residues 503–523 traverse the membrane as a helical segment; the sequence is VFMIKYLMTMIVGITSSFWIW. Topologically, residues 524–548 are cytoplasmic; that stretch reads SGKTLQSWRRFYHRLGNGSKGETAV. The Lys-Thr-X-X-X-Trp motif, mediates interaction with the PDZ domain of Dvl family members motif lies at 526 to 531; that stretch reads KTLQSW. The PDZ-binding signature appears at 546–548; the sequence is TAV.

Belongs to the G-protein coupled receptor Fz/Smo family. Interacts with wnt11 and sdc4. The extracellular domain interacts with the extracellular domain of pcdh8/papc. Interacts (via C-terminus) with dvl1 (via PDZ domain). During gastrulation, broadly expressed on the dorsal side of the embryo in deep mesodermal cells surrounding the blastopore lip and in presumptive anterior neuroectoderm. During neurulation, localized to the cranial neural crest and heart field where expression is retained at later stages in addition to new areas of expression in the neural tube, pronephros and tailbud. At tailbud stage, expressed in the pronephric duct, and broad head expression becomes more restricted to the hindbrain. In tadpoles, strongly expressed in the eye and the pericardium and myocardium of the developing heart.

The protein resides in the cell membrane. Its subcellular location is the endosome membrane. In terms of biological role, receptor for Wnt proteins. Acts in both canonical and non-canonical Wnt pathways. Although different papers report differing Wnt preferences, wnt5a, wnt8b and wnt11 have been proposed as synergists. In the canonical Wnt pathway, acts via beta-catenin to promote the expression of the dorsal genes siamois, twin and nodal3 and to establish the dorsal axis of the embryo and induce dorsal mesoderm formation. In a non-canonical Wnt/planar cell polarity (PCP) pathway, acts with sdc4 and dvl2/dsh to regulate convergent extension cell movements during gastrulation. Triggers phosphorylation of dvl2/dsh and its translocation to the plasma membrane. In a third branch of Wnt signaling, acts in a non-canonical pathway via trimeric G proteins, and independently of dvl2/dsh, to recruit protein kinase C (PKC) to the membrane and thus activate PKC. PKC signaling controls cell sorting and tissue separation during gastrulation. The protein is Frizzled-7-B (fzd7-b) of Xenopus laevis (African clawed frog).